The primary structure comprises 295 residues: Putative S-adenosyl-L-methionine-dependent methyltransferase Mvan_0910 (295 aa).

S-adenosyl-L-methionine is bound by residues Asp126 and Asp155–Leu156.

The protein belongs to the UPF0677 family.

Exhibits S-adenosyl-L-methionine-dependent methyltransferase activity. This chain is Putative S-adenosyl-L-methionine-dependent methyltransferase Mvan_0910, found in Mycolicibacterium vanbaalenii (strain DSM 7251 / JCM 13017 / BCRC 16820 / KCTC 9966 / NRRL B-24157 / PYR-1) (Mycobacterium vanbaalenii).